The sequence spans 394 residues: Nuclear hormone receptor family member nhr-18 (394 aa).

The segment at residues 8–83 (SGSCEVCGDK…VGMDTRRFQT (76 aa)) is a DNA-binding region (nuclear receptor). NR C4-type zinc fingers lie at residues 11-31 (CEVC…CRAC) and 48-71 (CPNG…LKKC). In terms of domain architecture, NR LBD spans 134–394 (MLQKPTNHVL…FSHPEMFEAT (261 aa)).

This sequence belongs to the nuclear hormone receptor family.

It is found in the nucleus. Orphan nuclear receptor. The protein is Nuclear hormone receptor family member nhr-18 (nhr-18) of Caenorhabditis elegans.